A 437-amino-acid chain; its full sequence is UDP-N-acetylmuramate--L-alanine ligase (437 aa).

108–114 (GAHGKTS) provides a ligand contact to ATP.

Belongs to the MurCDEF family.

Its subcellular location is the cytoplasm. The catalysed reaction is UDP-N-acetyl-alpha-D-muramate + L-alanine + ATP = UDP-N-acetyl-alpha-D-muramoyl-L-alanine + ADP + phosphate + H(+). It participates in cell wall biogenesis; peptidoglycan biosynthesis. In terms of biological role, cell wall formation. This is UDP-N-acetylmuramate--L-alanine ligase from Lysinibacillus sphaericus (strain C3-41).